Here is a 620-residue protein sequence, read N- to C-terminus: Phosphopentomutase (620 aa).

Residues Arg-71 and Ser-173 each coordinate alpha-D-glucose 1,6-bisphosphate. Ser-173 serves as the catalytic Phosphoserine intermediate. Mg(2+) contacts are provided by Ser-173, Asp-330, Asp-332, and Asp-334. Ser-173 is modified (phosphoserine). Asp-334, Arg-335, Thr-408, Glu-432, and Lys-446 together coordinate alpha-D-glucose 1,6-bisphosphate.

It belongs to the phosphohexose mutase family. Monomer. The cofactor is Mg(2+). In terms of tissue distribution, highly expressed in lung, spleen and thymus. Expressed at lower levels in liver, brain, kidney, skeletal muscle, testis and heart.

The protein localises to the cytoplasm. The protein resides in the cytosol. The catalysed reaction is alpha-D-ribose 1-phosphate = D-ribose 5-phosphate. It carries out the reaction 2-deoxy-alpha-D-ribose 1-phosphate = 2-deoxy-D-ribose 5-phosphate. The enzyme catalyses alpha-D-glucose 1-phosphate = alpha-D-glucose 6-phosphate. It catalyses the reaction O-phospho-L-seryl-[protein] + alpha-D-glucose 1-phosphate = alpha-D-glucose 1,6-bisphosphate + L-seryl-[protein]. The catalysed reaction is alpha-D-glucose 1,6-bisphosphate + L-seryl-[protein] = O-phospho-L-seryl-[protein] + alpha-D-glucose 6-phosphate. In terms of biological role, catalyzes the conversion of the nucleoside breakdown products ribose-1-phosphate and deoxyribose-1-phosphate to the corresponding 5-phosphopentoses. Catalyzes the reversible isomerization of alpha-D-glucose 1-phosphate to alpha-D-glucose 6-phosphate but with a lower catalytic efficiency. The mechanism proceeds via the intermediate compound alpha-D-glucose 1,6-bisphosphate. In vitro, also has a low glucose 1,6-bisphosphate synthase activity which is most probably not physiologically relevant. The protein is Phosphopentomutase of Mus musculus (Mouse).